Here is a 319-residue protein sequence, read N- to C-terminus: Ribonucleoside-diphosphate reductase small chain (319 aa).

Residues 313–319 form an interaction with R1 region; the sequence is FSLDVDF.

This sequence belongs to the ribonucleoside diphosphate reductase small chain family. As to quaternary structure, interacts with RNR1/OPG080 subunit. Can interact with host RNR1 supunit. The cofactor is Fe cation.

The catalysed reaction is a 2'-deoxyribonucleoside 5'-diphosphate + [thioredoxin]-disulfide + H2O = a ribonucleoside 5'-diphosphate + [thioredoxin]-dithiol. Ribonucleoside-diphosphate reductase holoenzyme provides the precursors necessary for viral DNA synthesis. Allows virus growth in non-dividing cells. Catalyzes the biosynthesis of deoxyribonucleotides from the corresponding ribonucleotides. This Cynomys gunnisoni (Gunnison's prairie dog) protein is Ribonucleoside-diphosphate reductase small chain (OPG048).